The following is a 364-amino-acid chain: Protein-glutamate methylesterase/protein-glutamine glutaminase (364 aa).

The Response regulatory domain occupies 7–124 (RALIVDDSAL…SQNMPDMAEE (118 aa)). The residue at position 58 (Asp58) is a 4-aspartylphosphate. One can recognise a CheB-type methylesterase domain in the interval 167 to 364 (ETTSFVRNVL…MAEEIVKIIS (198 aa)). Active-site residues include Ser181, His208, and Asp308.

It belongs to the CheB family. Phosphorylated by CheA. Phosphorylation of the N-terminal regulatory domain activates the methylesterase activity.

Its subcellular location is the cytoplasm. It catalyses the reaction [protein]-L-glutamate 5-O-methyl ester + H2O = L-glutamyl-[protein] + methanol + H(+). The enzyme catalyses L-glutaminyl-[protein] + H2O = L-glutamyl-[protein] + NH4(+). Its function is as follows. Involved in chemotaxis. Part of a chemotaxis signal transduction system that modulates chemotaxis in response to various stimuli. Catalyzes the demethylation of specific methylglutamate residues introduced into the chemoreceptors (methyl-accepting chemotaxis proteins or MCP) by CheR. Also mediates the irreversible deamidation of specific glutamine residues to glutamic acid. This chain is Protein-glutamate methylesterase/protein-glutamine glutaminase, found in Methanosarcina barkeri (strain Fusaro / DSM 804).